The primary structure comprises 327 residues: Aldo/keto reductase slr0942 (327 aa).

18–27 is a binding site for NADP(+); it reads GEQIPALGLG. The active-site Proton donor is Tyr-57. His-119 serves as a coordination point for substrate. 216–280 serves as a coordination point for NADP(+); it reads SPLGSGDRPA…SVNPERLEQN (65 aa).

Belongs to the aldo/keto reductase family. Monomer.

The enzyme catalyses a secondary alcohol + NADP(+) = a ketone + NADPH + H(+). Curcumin non-competitively inhibits the enzyme with respect to furfural. To a lesser extent, enzyme activity is also inhibited by indomethacin, coumarate, coumarin, and alrestatin. In terms of biological role, aldo/keto reductase with broad substrate spectrum. Catalyzes the NADPH-dependent reduction of aldehyde- and ketone-groups of different classes of carbonyl compounds to the corresponding alcohols. Highest enzymatic efficiency is observed with 4-oxonon-2-enal (4-ONE) and 4-hydroxynon-2-enal (4-HNE), that are lipid peroxidation products, and 9,10-phenanthrenequinone (9,10-PQ), a photoproduct of phenanthrene that is one of the most prevalent polycyclic aromatic hydrocarbons in the environment. Is also active on sugar-derived reactive carbonyls such as methylglyoxal (MG), glyoxal and 3-deoxyglucosone (3-DG), and on other lipid-derived carbonyls such as acrolein. May be involved in the detoxification of the toxic lipid peroxidation products 4-ONE and 4-HNE besides many other exo- and endogenic reactive carbonyl compounds (RCs) that may lead to photoinhibition or other cell damages. This is Aldo/keto reductase slr0942 from Synechocystis sp. (strain ATCC 27184 / PCC 6803 / Kazusa).